We begin with the raw amino-acid sequence, 159 residues long: 18.0 kDa class I heat shock protein (159 aa).

In terms of domain architecture, sHSP spans 45–159 (ETAAFANTHI…PEVKSIHISG (115 aa)).

This sequence belongs to the small heat shock protein (HSP20) family. In terms of assembly, forms oligomeric structures.

It localises to the cytoplasm. This Daucus carota (Wild carrot) protein is 18.0 kDa class I heat shock protein.